The sequence spans 202 residues: HTH-type transcriptional regulator BetI (202 aa).

Residues 8–68 form the HTH tetR-type domain; the sequence is PIRRRQLIDA…ATMRDITRQL (61 aa). Residues 31–50 constitute a DNA-binding region (H-T-H motif); it reads TIAQIARRAGVSAGIISHYF.

It functions in the pathway amine and polyamine biosynthesis; betaine biosynthesis via choline pathway [regulation]. Functionally, repressor involved in the biosynthesis of the osmoprotectant glycine betaine. It represses transcription of the choline transporter BetT and the genes of BetAB involved in the synthesis of glycine betaine. This Cronobacter sakazakii (strain ATCC BAA-894) (Enterobacter sakazakii) protein is HTH-type transcriptional regulator BetI.